The primary structure comprises 407 residues: Imidazolonepropionase (407 aa).

Fe(3+) contacts are provided by H68 and H70. Residues H68 and H70 each contribute to the Zn(2+) site. The 4-imidazolone-5-propanoate site is built by R77, Y140, and H173. Y140 contacts N-formimidoyl-L-glutamate. H238 lines the Fe(3+) pocket. Residue H238 coordinates Zn(2+). Residue Q241 participates in 4-imidazolone-5-propanoate binding. Residue D313 participates in Fe(3+) binding. D313 contacts Zn(2+). The N-formimidoyl-L-glutamate site is built by N315 and G317. T318 contributes to the 4-imidazolone-5-propanoate binding site.

It belongs to the metallo-dependent hydrolases superfamily. HutI family. Zn(2+) is required as a cofactor. It depends on Fe(3+) as a cofactor.

The protein resides in the cytoplasm. It carries out the reaction 4-imidazolone-5-propanoate + H2O = N-formimidoyl-L-glutamate. It functions in the pathway amino-acid degradation; L-histidine degradation into L-glutamate; N-formimidoyl-L-glutamate from L-histidine: step 3/3. Catalyzes the hydrolytic cleavage of the carbon-nitrogen bond in imidazolone-5-propanoate to yield N-formimidoyl-L-glutamate. It is the third step in the universal histidine degradation pathway. The chain is Imidazolonepropionase from Burkholderia ambifaria (strain ATCC BAA-244 / DSM 16087 / CCUG 44356 / LMG 19182 / AMMD) (Burkholderia cepacia (strain AMMD)).